Consider the following 245-residue polypeptide: Uracil-DNA glycosylase (245 aa).

The active-site Proton acceptor is the Asp-82.

This sequence belongs to the uracil-DNA glycosylase (UDG) superfamily. UNG family.

It is found in the cytoplasm. The catalysed reaction is Hydrolyzes single-stranded DNA or mismatched double-stranded DNA and polynucleotides, releasing free uracil.. Excises uracil residues from the DNA which can arise as a result of misincorporation of dUMP residues by DNA polymerase or due to deamination of cytosine. This Deinococcus geothermalis (strain DSM 11300 / CIP 105573 / AG-3a) protein is Uracil-DNA glycosylase.